A 341-amino-acid polypeptide reads, in one-letter code: Ketol-acid reductoisomerase (NADP(+)) (341 aa).

The KARI N-terminal Rossmann domain maps to 2–181 (AKVYYNGDAN…GAARAGVLET (180 aa)). Residues 25 to 28 (YGSQ), Arg-48, Ser-52, and 82 to 85 (DEKQ) contribute to the NADP(+) site. Residue His-107 is part of the active site. An NADP(+)-binding site is contributed by Gly-133. In terms of domain architecture, KARI C-terminal knotted spans 182–327 (TFKEETETDL…RELRSMMPFV (146 aa)). Mg(2+) is bound by residues Asp-190, Glu-194, Glu-226, and Glu-230. Ser-251 contacts substrate.

Belongs to the ketol-acid reductoisomerase family. It depends on Mg(2+) as a cofactor.

It catalyses the reaction (2R)-2,3-dihydroxy-3-methylbutanoate + NADP(+) = (2S)-2-acetolactate + NADPH + H(+). The enzyme catalyses (2R,3R)-2,3-dihydroxy-3-methylpentanoate + NADP(+) = (S)-2-ethyl-2-hydroxy-3-oxobutanoate + NADPH + H(+). It participates in amino-acid biosynthesis; L-isoleucine biosynthesis; L-isoleucine from 2-oxobutanoate: step 2/4. Its pathway is amino-acid biosynthesis; L-valine biosynthesis; L-valine from pyruvate: step 2/4. Its function is as follows. Involved in the biosynthesis of branched-chain amino acids (BCAA). Catalyzes an alkyl-migration followed by a ketol-acid reduction of (S)-2-acetolactate (S2AL) to yield (R)-2,3-dihydroxy-isovalerate. In the isomerase reaction, S2AL is rearranged via a Mg-dependent methyl migration to produce 3-hydroxy-3-methyl-2-ketobutyrate (HMKB). In the reductase reaction, this 2-ketoacid undergoes a metal-dependent reduction by NADPH to yield (R)-2,3-dihydroxy-isovalerate. The polypeptide is Ketol-acid reductoisomerase (NADP(+)) (Geobacillus thermodenitrificans (strain NG80-2)).